The following is a 220-amino-acid chain: Deoxyribose-phosphate aldolase (220 aa).

Asp-89 functions as the Proton donor/acceptor in the catalytic mechanism. Lys-151 functions as the Schiff-base intermediate with acetaldehyde in the catalytic mechanism. The Proton donor/acceptor role is filled by Lys-180.

Belongs to the DeoC/FbaB aldolase family. DeoC type 1 subfamily. In terms of assembly, homotetramer, in solution and in the crystal structure.

Its subcellular location is the cytoplasm. The enzyme catalyses 2-deoxy-D-ribose 5-phosphate = D-glyceraldehyde 3-phosphate + acetaldehyde. The protein operates within carbohydrate degradation; 2-deoxy-D-ribose 1-phosphate degradation; D-glyceraldehyde 3-phosphate and acetaldehyde from 2-deoxy-alpha-D-ribose 1-phosphate: step 2/2. Catalyzes a reversible aldol reaction between acetaldehyde and D-glyceraldehyde 3-phosphate to generate 2-deoxy-D-ribose 5-phosphate. In Thermus thermophilus (strain ATCC 27634 / DSM 579 / HB8), this protein is Deoxyribose-phosphate aldolase.